A 160-amino-acid polypeptide reads, in one-letter code: Tumor suppressor ARF (160 aa).

The segment at 1 to 63 (MGRRFVVTVR…RRGPQPHPGP (63 aa)) is interaction with CDK5RAP3 and MDM2. Disordered regions lie at residues 49–74 (PERIARRGPQPHPGPGDDDGQRQSGS) and 90–116 (HPLPTGARRSAGGLPRHSGSTAPGRGA).

As to quaternary structure, does not interact with cyclins, CDK1, CDK2, CDK4, CDK5 or CDK6. Binds to BCL6, E2F1, HUWE1, MDM2, MYC, NPM1/B23, TOP1/TOPOI and UBE2I/UBC9. Interacts with TBRG1 and COMMD1. Interacts with CDKN2AIP and E4F1. Interacts with CDK5RAP3 and MDM2; form a ternary complex involved in regulation of p53/TP53. Interacts with NOP53; the interaction is direct and promotes ARF nucleoplasmic relocalization and ubiquitin-mediated proteasomal degradation. Interacts with TTF1 (via the N-terminal region (NRD) and a C-terminal region); the interaction is direct and inhibits the nucleolar localization of TTF1. In terms of processing, ubiquitinated in normal cells by TRIP12 via the ubiquitin fusion degradation (UFD) pathway, a process that mediates ubiquitination at the N-terminus, regardless of the absence of lysine residues. Ubiquitination leads to its proteasomal degradation. In cancer cells, however, TRIP12 is located in a different cell compartment, preventing ubiquitination and degradation. As to expression, widely expressed with very low levels in kidney and colon.

It is found in the nucleus. The protein resides in the nucleolus. Its subcellular location is the nucleoplasm. Capable of inducing cell cycle arrest in G1 and G2 phases. Acts as a tumor suppressor. Binds to MDM2 and blocks its nucleocytoplasmic shuttling by sequestering it in the nucleolus. This inhibits the oncogenic action of MDM2 by blocking MDM2-induced degradation of p53 and enhancing p53-dependent transactivation and apoptosis. Also induces G2 arrest and apoptosis in a p53-independent manner by preventing the activation of cyclin B1/CDC2 complexes. Binds to BCL6 and down-regulates BCL6-induced transcriptional repression. Binds to E2F1 and MYC and blocks their transcriptional activator activity but has no effect on MYC transcriptional repression. Binds to TOP1/TOPOI and stimulates its activity. This complex binds to rRNA gene promoters and may play a role in rRNA transcription and/or maturation. Interacts with NPM1/B23 and promotes its polyubiquitination and degradation, thus inhibiting rRNA processing. Plays a role in inhibiting ribosome biogenesis, perhaps by binding to the nucleolar localization sequence of transcription termination factor TTF1, and thereby preventing nucleolar localization of TTF1. Interacts with COMMD1 and promotes its 'Lys63'-linked polyubiquitination. Interacts with UBE2I/UBC9 and enhances sumoylation of a number of its binding partners including MDM2 and E2F1. Binds to HUWE1 and represses its ubiquitin ligase activity. May play a role in controlling cell proliferation and apoptosis during mammary gland development. This chain is Tumor suppressor ARF, found in Rattus norvegicus (Rat).